The primary structure comprises 418 residues: Glutamyl-tRNA reductase (418 aa).

Residues 49–52 (TCNR), serine 107, 112–114 (EPQ), and glutamine 118 each bind substrate. Cysteine 50 functions as the Nucleophile in the catalytic mechanism. Position 187 to 192 (187 to 192 (GAGETI)) interacts with NADP(+).

It belongs to the glutamyl-tRNA reductase family. In terms of assembly, homodimer.

It carries out the reaction (S)-4-amino-5-oxopentanoate + tRNA(Glu) + NADP(+) = L-glutamyl-tRNA(Glu) + NADPH + H(+). The protein operates within porphyrin-containing compound metabolism; protoporphyrin-IX biosynthesis; 5-aminolevulinate from L-glutamyl-tRNA(Glu): step 1/2. Functionally, catalyzes the NADPH-dependent reduction of glutamyl-tRNA(Glu) to glutamate 1-semialdehyde (GSA). This is Glutamyl-tRNA reductase from Vibrio parahaemolyticus serotype O3:K6 (strain RIMD 2210633).